A 139-amino-acid chain; its full sequence is Large ribosomal subunit protein bL17 (139 aa).

The interval 120–139 (EDAKGRDSGPTQDNSEAEAA) is disordered.

Part of the 50S ribosomal subunit. Contacts protein L32. Post-translationally, may be methylated thrice, on undetermined residues.

The protein is Large ribosomal subunit protein bL17 of Rhodopseudomonas palustris (strain ATCC BAA-98 / CGA009).